Reading from the N-terminus, the 284-residue chain is tRNA dimethylallyltransferase (284 aa).

6–13 (GPTASGKS) contacts ATP. Substrate is bound at residue 8–13 (TASGKS). The interval 31–34 (DSLS) is interaction with substrate tRNA.

The protein belongs to the IPP transferase family. In terms of assembly, monomer. The cofactor is Mg(2+).

It carries out the reaction adenosine(37) in tRNA + dimethylallyl diphosphate = N(6)-dimethylallyladenosine(37) in tRNA + diphosphate. Its function is as follows. Catalyzes the transfer of a dimethylallyl group onto the adenine at position 37 in tRNAs that read codons beginning with uridine, leading to the formation of N6-(dimethylallyl)adenosine (i(6)A). In Nautilia profundicola (strain ATCC BAA-1463 / DSM 18972 / AmH), this protein is tRNA dimethylallyltransferase.